The sequence spans 435 residues: MAIIEPQMENQNTIPIYAREETPYDTLSKVLTFSNIDQEEYWRRIAPLLGKLLQQGSNYTIHQQYQHLCFYALHVIPLLGPFPVEGRSSYNCPLGGVGAIEPSQNFQKSGTSLRYTFEPTSTGAISGRSDPFNRFMIDDALSRFRQAGVRFNPHLYEALKKEVLLTDEEAEAICQHHDVPKMEFRAQACIAVDLDGGNMSVKLYVYPMLKATLLNIPNWELCLNAIRHVDGEGQFTSATAALETYLRTQCPTTVREQTSATTQVSYIACDLVDLQRARFKVYLFDLHVSFERIITHWTMGGRLNDEVTMSGLGILRELWDELKIPEGRRKPIERPPKPGDGPTMPLFFNYEMKAGDRLPKVKAYLPLVGMPEMPIARKLAAFFQRYGFPVEGRQYVDTLAGYFPDEDLEIVTHHQAFLSFSYSAKTGPYMTIYYH.

E101 contacts substrate. Dimethylallyl diphosphate is bound by residues R114, K202, and Y204. Y206 lines the substrate pocket. Dimethylallyl diphosphate-binding residues include K280, Y282, Y364, Y429, and Y433.

It belongs to the tryptophan dimethylallyltransferase family.

Its pathway is secondary metabolite biosynthesis. Functionally, prenyltransferase; part of the gene cluster that mediates the biosynthesis of the benzazepine alkaloid nanangelenin A which contains an unprecedented 3,4-dihydro-1-benzazepine-2,5-dione-N-prenyl-N-acetoxy-anthranilamide scaffold. The first step of nanangelenin biosynthesis is catalyzed by the indoleamine 2,3-dioxygenase nanC which produces N-formyl-kynurenine through the catabolism of tryptophan. The two-module NRPS nanA then utilizes anthranilate (Ant) and L-kynurenine (L-Kyn) to assemble the dipeptide product nanangelenin B. The first adenylation domain of nanA (A1) loads anthranilate onto the T1 domain, while A2 loads kynurenine, generated through spontaneous nonenzymatic deformylation of the nanC-supplied N-formyl-kynurenine. The peptide bond formation between the tethered amino acids is catalyzed by the first condensation domain (C1) between anthranilate's carbonyl carbon and kynurenine's aliphatic primary amine. The second C domain (C2) catalyzes the final cyclization event between the aromatic amine of kynurenine and the tethered carbonyl carbon, yielding nanangelenin B. The terminal T3 domain enhances the catalytic efficiency of C2, suggesting the T2-tethered Ant-L-Kyn is transferred to T3 prior to cyclization by C2. Once released from nanA, nanangelenin B is then prenylated by the prenyltransferase nanD to form nanangelenin C. Nanangelenin C is then N-hydroxylated by the FAD-dependent monooxygenase nanF and further acetylated by the acetyltransferase nanB to yield nanangelenin F. Finally, the N-methyltransferase nanE methylates the amide nitrogen of 1-benzazepine to convert nanangelenin F into nanangelenin A. NanE is also able to methylate most of the intermediates of the pathway such as nanangelenin B and nanangelenin C to produce nanangelenin D and nanangelenin E, respectively. The protein is Prenyltransferase nanD of Aspergillus nanangensis.